The primary structure comprises 684 residues: Protein EXECUTER 1, chloroplastic (684 aa).

The span at 1 to 31 shows a compositional bias: polar residues; sequence MPSLSTPPSQNLAFSPAASATSSRLTPSSKR. Residues 1 to 46 constitute a chloroplast transit peptide; sequence MPSLSTPPSQNLAFSPAASATSSRLTPSSKRSFYPHRLPDPTALCR. Residues 1–66 are disordered; sequence MPSLSTPPSQ…SSSSSDDNPR (66 aa). Residues 48–61 are compositionally biased toward low complexity; sequence SSSSGSNSSSSSSS. A UVR domain is found at 127–162; that stretch reads DRLLSVLKSQLNRAIKREDYEDAARLKVAIAATATN. Residues 278 to 318 form a disordered region; that stretch reads TLTPGRFLTSPGRKEDTGNLAVESSEDEESDNSDDDSDLLE. Residues 301 to 318 are compositionally biased toward acidic residues; that stretch reads SSEDEESDNSDDDSDLLE.

It is found in the plastid. It localises to the chloroplast. In terms of biological role, together with EX2, enables higher plants to perceive singlet oxygen as a stress signal in plastid that activates a genetically determined nuclear stress response program which triggers a programmed cell death (PCD). This transfer of singlet oxygen-induced stress-related signals from the plastid to the nucleus that triggers genetically controlled PCD pathway is unique to photosynthetic eukaryotes and operates under mild stress conditions, impeding photosystem II (PSII) without causing photooxidative damage of the plant. The polypeptide is Protein EXECUTER 1, chloroplastic (Arabidopsis thaliana (Mouse-ear cress)).